Reading from the N-terminus, the 248-residue chain is UPF0273 protein APE_1505.1 (248 aa).

Residues 3 to 247 (DRVKTGIPGM…VVRIGRRVSI (245 aa)) form the KaiC domain. 30-37 (GGPGTGKS) serves as a coordination point for ATP.

Belongs to the UPF0273 family.

This is UPF0273 protein APE_1505.1 from Aeropyrum pernix (strain ATCC 700893 / DSM 11879 / JCM 9820 / NBRC 100138 / K1).